A 200-amino-acid chain; its full sequence is Holliday junction branch migration complex subunit RuvA (200 aa).

A domain I region spans residues 1 to 64; sequence MITSIQGTLV…EDSQTLYGFA (64 aa). Positions 65–144 are domain II; it reads SPAERDFFRL…ATGAAPGLAT (80 aa). The flexible linker stretch occupies residues 145-151; the sequence is QPAAAAS. The segment at 152 to 200 is domain III; sequence PGASAHRDAVAALVALGYRSADADEAVRRASLALGEAATTESLIKKALS.

Belongs to the RuvA family. As to quaternary structure, homotetramer. Forms an RuvA(8)-RuvB(12)-Holliday junction (HJ) complex. HJ DNA is sandwiched between 2 RuvA tetramers; dsDNA enters through RuvA and exits via RuvB. An RuvB hexamer assembles on each DNA strand where it exits the tetramer. Each RuvB hexamer is contacted by two RuvA subunits (via domain III) on 2 adjacent RuvB subunits; this complex drives branch migration. In the full resolvosome a probable DNA-RuvA(4)-RuvB(12)-RuvC(2) complex forms which resolves the HJ.

Its subcellular location is the cytoplasm. Functionally, the RuvA-RuvB-RuvC complex processes Holliday junction (HJ) DNA during genetic recombination and DNA repair, while the RuvA-RuvB complex plays an important role in the rescue of blocked DNA replication forks via replication fork reversal (RFR). RuvA specifically binds to HJ cruciform DNA, conferring on it an open structure. The RuvB hexamer acts as an ATP-dependent pump, pulling dsDNA into and through the RuvAB complex. HJ branch migration allows RuvC to scan DNA until it finds its consensus sequence, where it cleaves and resolves the cruciform DNA. The sequence is that of Holliday junction branch migration complex subunit RuvA from Opitutus terrae (strain DSM 11246 / JCM 15787 / PB90-1).